The following is a 67-amino-acid chain: Large ribosomal subunit protein bL35 (67 aa).

The protein belongs to the bacterial ribosomal protein bL35 family.

This chain is Large ribosomal subunit protein bL35, found in Agrobacterium fabrum (strain C58 / ATCC 33970) (Agrobacterium tumefaciens (strain C58)).